The following is a 300-amino-acid chain: Putative glycosyltransferase ORF300 (300 aa).

It belongs to the glycosyltransferase group 1 family. Glycosyltransferase 4 subfamily.

This Acidianus hospitalis (AFV-1) protein is Putative glycosyltransferase ORF300.